A 185-amino-acid chain; its full sequence is Ribosome-recycling factor (185 aa).

It belongs to the RRF family.

It is found in the cytoplasm. Its function is as follows. Responsible for the release of ribosomes from messenger RNA at the termination of protein biosynthesis. May increase the efficiency of translation by recycling ribosomes from one round of translation to another. The sequence is that of Ribosome-recycling factor from Photobacterium profundum (strain SS9).